Consider the following 235-residue polypeptide: MIYAGILAGGTGTRMGISNLPKQFLELGDRPILIHTIEKFVLEPSIEKIVVGVHGDWVSHAEDLVDKYLPLYKERIIITKGGADRNTSIKKIIEAIDAYRPLTPEDIVVTHDSVRPFITLRMIQDNIQLAQNHDAVDTVVEAVDTIVESTNGQFITDIPNRAHLYQGQTPQTFRCKDFVDLYGSLSDEEKEILTDACKIFVIKGKDVALAKGEYSNLKITTVTDLKIAKSMIEKD.

CTP-binding positions include Leu7–Gly10, Gly82–Ser88, and Ser113.

This sequence belongs to the IspD/TarI cytidylyltransferase family. TarI subfamily.

The catalysed reaction is D-ribitol 5-phosphate + CTP + H(+) = CDP-L-ribitol + diphosphate. Its pathway is cell wall biogenesis; poly(ribitol phosphate) teichoic acid biosynthesis. Catalyzes the transfer of the cytidylyl group of CTP to D-ribitol 5-phosphate. This chain is Ribitol-5-phosphate cytidylyltransferase, found in Streptococcus pneumoniae (strain Hungary19A-6).